A 365-amino-acid chain; its full sequence is TD and POZ domain-containing protein 1-like (365 aa).

Residues 19-149 (KFCYKWTISN…EDQLTICCKV (131 aa)) form the MATH domain. Residues 188–255 (TDCCLLVAGH…IYTGKAPYLH (68 aa)) enclose the BTB domain.

The protein belongs to the Tdpoz family.

The polypeptide is TD and POZ domain-containing protein 1-like (Mus musculus (Mouse)).